A 258-amino-acid chain; its full sequence is MKNYLLQIEYFGKNYCGWQRQSHSPSIQEELEKALSKIANQNIEVTCAGRTDTGVHATSQVVNFHSDADRNLSSWMRGTNALLPQGIKILDIKEVDNDFNSRFTATNRTYNYIIYNSAISSPILAEHCLWENRQLNIDKMNQACKYLLGEQDFTSFRSSQCQSNTPFRNIQKAEFIKQGSFIVFEVVGNAFLHHMIRNFIGSLLKIGLEFESPEWIKLVLEAKDRTKAAETAKAHGLYFVGVEYPEFSFRRRVIELFC.

Catalysis depends on Asp52, which acts as the Nucleophile. Tyr110 serves as a coordination point for substrate.

It belongs to the tRNA pseudouridine synthase TruA family. Homodimer.

It carries out the reaction uridine(38/39/40) in tRNA = pseudouridine(38/39/40) in tRNA. Formation of pseudouridine at positions 38, 39 and 40 in the anticodon stem and loop of transfer RNAs. The sequence is that of tRNA pseudouridine synthase A from Francisella philomiragia subsp. philomiragia (strain ATCC 25017 / CCUG 19701 / FSC 153 / O#319-036).